The following is a 25-amino-acid chain: Cytochrome c oxidase subunit 1 (25 aa).

The protein belongs to the heme-copper respiratory oxidase family. Requires Cu(2+) as cofactor. Heme is required as a cofactor.

Its subcellular location is the cell inner membrane. The enzyme catalyses 4 Fe(II)-[cytochrome c] + O2 + 8 H(+)(in) = 4 Fe(III)-[cytochrome c] + 2 H2O + 4 H(+)(out). The protein operates within energy metabolism; oxidative phosphorylation. Functionally, subunit I and II form the functional core of the enzyme complex. Electrons originating in cytochrome c are transferred via heme a and Cu(A) to the binuclear center formed by heme a3 and Cu(B). This cytochrome c oxidase shows proton pump activity across the membrane in addition to the electron transfer. The protein is Cytochrome c oxidase subunit 1 (ctaD) of Paracoccus versutus (Thiobacillus versutus).